The following is a 211-amino-acid chain: Urease accessory protein UreG (211 aa).

Residue G11 to T18 coordinates GTP.

The protein belongs to the SIMIBI class G3E GTPase family. UreG subfamily. As to quaternary structure, homodimer. UreD, UreF and UreG form a complex that acts as a GTP-hydrolysis-dependent molecular chaperone, activating the urease apoprotein by helping to assemble the nickel containing metallocenter of UreC. The UreE protein probably delivers the nickel.

The protein localises to the cytoplasm. In terms of biological role, facilitates the functional incorporation of the urease nickel metallocenter. This process requires GTP hydrolysis, probably effectuated by UreG. The protein is Urease accessory protein UreG of Actinobacillus pleuropneumoniae serotype 3 (strain JL03).